The following is a 2873-amino-acid chain: MRRGGLLEVALAFALLLESYTSHGADANLEAGSLKETRANRAKRRGGGGHDALKGPNVCGSRYNAYCCPGWKTLPGGNQCIVPICRHSCGDGFCSRPNMCTCPSGQISPSCGSRSIQHCSIRCMNGGSCSDDHCLCQKGYIGTHCGQPVCESGCLNGGRCVAPNRCACTYGFTGPQCERDYRTGPCFTVVSNQMCQGQLSGIVCTKTLCCATVGRAWGHPCEMCPAQPHPCRRGFIPNIRTGACQDVDECQAIPGMCQGGNCINTVGSFECKCPAGHKFNEVSQKCEDIDECSTIPGVCDGGECTNTVSSYFCKCPPGFYTSPDGTRCVDVRPGYCYTALANGRCSNQLPQSITKMQCCCDLGRCWSPGVTVAPEMCPIRSTEDFNKLCSVPLVIPGRPEYPPPPIGPLPPVQPVPPGYPPGPVIPAPRPPPEYPYPSPSREPPRVLPFNVTDYCQLVRYLCQNGRCIPTPGSYRCECNKGFQLDIRGECIDVDECEKNPCTGGECINNQGSYTCHCRAGYQSTLTRTECRDIDECLQNGRICNNGRCINTDGSFHCVCNAGFHVTRDGKNCEDMDECSIRNMCLNGMCINEDGSFKCICKPGFQLASDGRYCKDINECETPGICMNGRCVNTDGSYRCECFPGLAVGLDGRVCVDTHMRSTCYGGYRRGQCVKPLFGAVTKSECCCASTEYAFGEPCQPCPAQNSAEYQALCSSGPGMTSAGTDINECALDPDICPNGICENLRGTYKCICNSGYEVDITGKNCVDINECVLNSLLCDNGQCRNTPGSFVCTCPKGFVYKPDLKTCEDIDECESSPCINGVCKNSPGSFICECSPESTLDPTKTICIETIKGTCWQTVIDGRCEININGATLKSECCSSLGAAWGSPCTICQLDPICGKGFSRIKGTQCEDINECEVFPGVCKNGLCVNSRGSFKCECPNGMTLDATGRICLDIRLETCFLKYDDEECTLPIAGRHRMDACCCSVGAAWGTEECEECPLRNSREYEELCPRGPGFATKDITNGKPFFKDINECKMIPSLCTHGKCRNTIGSFKCRCDSGFALDSEERNCTDIDECRISPDLCGRGQCVNTPGDFECKCDEGYESGFMMMKNCMDIDECQRDPLLCRGGICHNTEGSYRCECPPGHQLSPNISACIDINECELSANLCPHGRCVNLIGKYQCACNPGYHPTHDRLFCVDIDECSIMNGGCETFCTNSDGSYECSCQPGFALMPDQRSCTDIDECEDNPNICDGGQCTNIPGEYRCLCYDGFMASEDMKTCVDVNECDLNPNICLSGTCENTKGSFICHCDMGYSGKKGKTGCTDINECEIGAHNCGRHAVCTNTAGSFKCSCSPGWIGDGIKCTDLDECSNGTHMCSQHADCKNTMGSYRCLCKDGYTGDGFTCTDLDECSENLNLCGNGQCLNAPGGYRCECDMGFVPSADGKACEDIDECSLPNICVFGTCHNLPGLFRCECEIGYELDRSGGNCTDVNECLDPTTCISGNCVNTPGSYTCDCPPDFELNPTRVGCVDTRSGNCYLDIRPRGDNGDTACSNEIGVGVSKASCCCSLGKAWGTPCELCPSVNTSEYKILCPGGEGFRPNPITVILEDIDECQELPGLCQGGKCINTFGSFQCRCPTGYYLNEDTRVCDDVNECETPGICGPGTCYNTVGNYTCICPPDYMQVNGGNNCMDMRRSLCYRNYYADNQTCDGELLFNMTKKMCCCSYNIGRAWNKPCEQCPIPSTDEFATLCGSQRPGFVIDIYTGLPVDIDECREIPGVCENGVCINMVGSFRCECPVGFFYNDKLLVCEDIDECQNGPVCQRNAECINTAGSYRCDCKPGYRLTSTGQCNDRNECQEIPNICSHGQCIDTVGSFYCLCHTGFKTNVDQTMCLDINECERDACGNGTCRNTIGSFNCRCNHGFILSHNNDCIDVDECATGNGNLCRNGQCVNTVGSFQCRCNEGYEVAPDGRTCVDINECVLDPGKCAPGTCQNLDGSYRCICPPGYSLQNDKCEDIDECVEEPEICALGTCSNTEGSFKCLCPEGFSLSSTGRRCQDLRMSYCYAKFEGGKCSSPKSRNHSKQECCCALKGEGWGDPCELCPTEPDEAFRQICPFGSGIIVGPDDSAVDMDECKEPDVCRHGQCINTDGSYRCECPFGYILEGNECVDTDECSVGNPCGNGTCKNVIGGFECTCEEGFEPGPMMTCEDINECAQNPLLCAFRCVNTYGSYECKCPVGYVLREDRRMCKDEDECAEGKHDCTEKQMECKNLIGTYMCICGPGYQRRPDGEGCIDENECQTKPGICENGRCLNTLGSYTCECNDGFTASPTQDECLDNREGYCFSEVLQNMCQIGSSNRNPVTKSECCCDGGRGWGPHCEICPFEGTVAYKKLCPHGRGFMTNGADIDECKVIHDVCRNGECVNDRGSYHCICKTGYTPDITGTACVDLNECNQAPKPCNFICKNTEGSYQCSCPKGYILQEDGRSCKDLDECATKQHNCQFLCVNTIGGFTCKCPPGFTQHHTACIDNNECTSDINLCGSKGVCQNTPGSFTCECQRGFSLDQSGASCEDVDECEGNHRCQHGCQNIIGGYRCSCPQGYLQHYQWNQCVDENECLSAHVCGGASCHNTLGSYKCMCPTGFQYEQFSGGCQDINECGSSQAPCSYGCSNTEGGYLCGCPPGYFRIGQGHCVSGMGMGRGGPEPPASSEMDDNSLSPEACYECKINGYPKRGRKRRSTNETDASDIQDGSEMEANVSLASWDVEKPASFAFNISHVNNKVRILELLPALTTLMNHNRYLIESGNEDGFFKINQKEGVSYLHFTKKKPVAGTYSLQISSTPLYKKKELNQLEDRYDKDYLSGELGDNLKMKIQILLH.

Residues 1-24 (MRRGGLLEVALAFALLLESYTSHG) form the signal peptide. Positions 25–44 (ADANLEAGSLKETRANRAKR) are excised as a propeptide. The interval 45–81 (RGGGGHDALKGPNVCGSRYNAYCCPGWKTLPGGNQCI) is fibrillin unique N-terminal (FUN) domain. Positions 45-452 (RGGGGHDALK…PPRVLPFNVT (408 aa)) are N-terminal domain. Cystine bridges form between Cys-59/Cys-68, Cys-67/Cys-80, Cys-85/Cys-94, Cys-89/Cys-100, Cys-102/Cys-111, Cys-119/Cys-129, Cys-123/Cys-134, Cys-136/Cys-145, Cys-150/Cys-160, Cys-154/Cys-166, and Cys-168/Cys-177. EGF-like domains follow at residues 81 to 112 (IVPICRHSCGDGFCSRPNMCTCPSGQISPSCG), 115 to 146 (SIQHCSIRCMNGGSCSDDHCLCQKGYIGTHCG), and 147 to 178 (QPVCESGCLNGGRCVAPNRCACTYGFTGPQCE). Positions 119–329 (CSIRCMNGGS…YTSPDGTRCV (211 aa)) are interaction with MFAP4. A TB 1 domain is found at 184–236 (GPCFTVVSNQMCQGQLSGIVCTKTLCCATVGRAWGHPCEMCPAQPHPCRRGFI). Residues 195-221 (CQGQLSGIVCTKTLCCATVGRAWGHPC) are hybrid domain 1. The region spanning 246-287 (DVDECQAIPGMCQGGNCINTVGSFECKCPAGHKFNEVSQKCE) is the EGF-like 4; calcium-binding domain. Cystine bridges form between Cys-250–Cys-262, Cys-257–Cys-271, Cys-273–Cys-286, Cys-292–Cys-304, Cys-299–Cys-313, and Cys-315–Cys-328. An O-linked (Glc) serine glycan is attached at Ser-268. One can recognise an EGF-like 5; calcium-binding domain in the interval 288-329 (DIDECSTIPGVCDGGECTNTVSSYFCKCPPGFYTSPDGTRCV). The 56-residue stretch at 334–389 (GYCYTALANGRCSNQLPQSITKMQCCCDLGRCWSPGVTVAPEMCPIRSTEDFNKLC) folds into the TB 2 domain. A glycan (N-linked (GlcNAc...) asparagine) is linked at Asn-450. The EGF-like 6 domain maps to 451–491 (VTDYCQLVRYLCQNGRCIPTPGSYRCECNKGFQLDIRGECI). 15 disulfide bridges follow: Cys-455-Cys-467, Cys-462-Cys-476, Cys-478-Cys-490, Cys-496-Cys-506, Cys-501-Cys-515, Cys-517-Cys-530, Cys-536-Cys-548, Cys-543-Cys-557, Cys-559-Cys-572, Cys-578-Cys-589, Cys-584-Cys-598, Cys-600-Cys-613, Cys-619-Cys-630, Cys-625-Cys-639, and Cys-641-Cys-654. The O-linked (Glc) serine glycan is linked to Ser-473. An EGF-like 7; calcium-binding domain is found at 492–531 (DVDECEKNPCTGGECINNQGSYTCHCRAGYQSTLTRTECR). An O-linked (Glc) serine glycan is attached at Ser-512. The EGF-like 8; calcium-binding domain occupies 532 to 573 (DIDECLQNGRICNNGRCINTDGSFHCVCNAGFHVTRDGKNCE). The region spanning 574 to 614 (DMDECSIRNMCLNGMCINEDGSFKCICKPGFQLASDGRYCK) is the EGF-like 9; calcium-binding domain. Residues 615 to 655 (DINECETPGICMNGRCVNTDGSYRCECFPGLAVGLDGRVCV) enclose the EGF-like 10; calcium-binding domain. Positions 661–713 (STCYGGYRRGQCVKPLFGAVTKSECCCASTEYAFGEPCQPCPAQNSAEYQALC) constitute a TB 3 domain. Residues 725–766 (DINECALDPDICPNGICENLRGTYKCICNSGYEVDITGKNCV) enclose the EGF-like 11; calcium-binding domain. Intrachain disulfides connect Cys-729-Cys-741, Cys-736-Cys-750, Cys-752-Cys-765, Cys-771-Cys-783, Cys-778-Cys-792, Cys-794-Cys-807, Cys-813-Cys-823, Cys-818-Cys-832, Cys-834-Cys-847, Cys-855-Cys-877, Cys-864-Cys-889, Cys-878-Cys-892, Cys-898-Cys-910, Cys-916-Cys-928, Cys-923-Cys-937, and Cys-939-Cys-952. The 42-residue stretch at 767 to 808 (DINECVLNSLLCDNGQCRNTPGSFVCTCPKGFVYKPDLKTCE) folds into the EGF-like 12; calcium-binding domain. The EGF-like 13; calcium-binding domain maps to 809–848 (DIDECESSPCINGVCKNSPGSFICECSPESTLDPTKTICI). Residues 853 to 904 (GTCWQTVIDGRCEININGATLKSECCSSLGAAWGSPCTICQLDPICGKGFSR) enclose the TB 4 domain. Residues 862 to 887 (GRCEININGATLKSECCSSLGAAWGS) are hybrid domain 2. An EGF-like 14; calcium-binding domain is found at 912 to 953 (DINECEVFPGVCKNGLCVNSRGSFKCECPNGMTLDATGRICL). The TB 5 domain maps to 958–1010 (ETCFLKYDDEECTLPIAGRHRMDACCCSVGAAWGTEECEECPLRNSREYEELC). The region spanning 1030-1071 (DINECKMIPSLCTHGKCRNTIGSFKCRCDSGFALDSEERNCT) is the EGF-like 15; calcium-binding domain. Disulfide bonds link Cys-1034/Cys-1046, Cys-1041/Cys-1055, Cys-1057/Cys-1070, Cys-1076/Cys-1088, Cys-1083/Cys-1097, Cys-1099/Cys-1113, Cys-1119/Cys-1131, Cys-1126/Cys-1140, Cys-1142/Cys-1155, Cys-1161/Cys-1173, Cys-1168/Cys-1182, Cys-1184/Cys-1197, Cys-1203/Cys-1214, Cys-1210/Cys-1223, Cys-1225/Cys-1238, Cys-1244/Cys-1256, Cys-1251/Cys-1265, Cys-1267/Cys-1280, Cys-1286/Cys-1298, Cys-1293/Cys-1307, Cys-1309/Cys-1322, Cys-1328/Cys-1341, Cys-1335/Cys-1350, Cys-1352/Cys-1363, Cys-1369/Cys-1382, Cys-1376/Cys-1391, Cys-1393/Cys-1404, Cys-1410/Cys-1422, Cys-1417/Cys-1431, Cys-1433/Cys-1446, Cys-1452/Cys-1463, Cys-1458/Cys-1472, Cys-1474/Cys-1487, Cys-1493/Cys-1504, Cys-1499/Cys-1513, Cys-1515/Cys-1528, Cys-1536/Cys-1564, Cys-1551/Cys-1576, Cys-1565/Cys-1579, Cys-1566/Cys-1591, Cys-1612/Cys-1624, Cys-1619/Cys-1633, Cys-1635/Cys-1648, Cys-1654/Cys-1665, Cys-1660/Cys-1674, and Cys-1676/Cys-1689. The N-linked (GlcNAc...) asparagine glycan is linked to Asn-1069. Positions 1072 to 1114 (DIDECRISPDLCGRGQCVNTPGDFECKCDEGYESGFMMMKNCM) constitute an EGF-like 16; calcium-binding domain. The 42-residue stretch at 1115 to 1156 (DIDECQRDPLLCRGGICHNTEGSYRCECPPGHQLSPNISACI) folds into the EGF-like 17; calcium-binding domain. Residue Ser-1137 is glycosylated (O-linked (Glc) serine). Asn-1151 carries an N-linked (GlcNAc...) asparagine glycan. In terms of domain architecture, EGF-like 18; calcium-binding spans 1157 to 1198 (DINECELSANLCPHGRCVNLIGKYQCACNPGYHPTHDRLFCV). Residues 1199–1239 (DIDECSIMNGGCETFCTNSDGSYECSCQPGFALMPDQRSCT) enclose the EGF-like 19; calcium-binding domain. Residue Ser-1220 is glycosylated (O-linked (Glc) serine). Residues 1240–1281 (DIDECEDNPNICDGGQCTNIPGEYRCLCYDGFMASEDMKTCV) enclose the EGF-like 20; calcium-binding domain. One can recognise an EGF-like 21; calcium-binding domain in the interval 1282 to 1323 (DVNECDLNPNICLSGTCENTKGSFICHCDMGYSGKKGKTGCT). Residue Ser-1304 is glycosylated (O-linked (Glc) serine). The EGF-like 22; calcium-binding domain occupies 1324 to 1364 (DINECEIGAHNCGRHAVCTNTAGSFKCSCSPGWIGDGIKCT). A glycan (O-linked (Glc) serine) is linked at Ser-1347. The EGF-like 23; calcium-binding domain maps to 1365–1405 (DLDECSNGTHMCSQHADCKNTMGSYRCLCKDGYTGDGFTCT). Asn-1371 carries an N-linked (GlcNAc...) asparagine glycan. Ser-1388 is a glycosylation site (O-linked (Glc) serine). The EGF-like 24; calcium-binding domain occupies 1406–1447 (DLDECSENLNLCGNGQCLNAPGGYRCECDMGFVPSADGKACE). The region spanning 1448-1488 (DIDECSLPNICVFGTCHNLPGLFRCECEIGYELDRSGGNCT) is the EGF-like 25; calcium-binding domain. N-linked (GlcNAc...) asparagine glycosylation is present at Asn-1486. Residues 1489–1529 (DVNECLDPTTCISGNCVNTPGSYTCDCPPDFELNPTRVGCV) enclose the EGF-like 26; calcium-binding domain. Ser-1510 is a glycosylation site (O-linked (Glc) serine). The C-terminal domain stretch occupies residues 1530-2733 (DTRSGNCYLD…GYPKRGRKRR (1204 aa)). The TB 6 domain occupies 1534–1591 (GNCYLDIRPRGDNGDTACSNEIGVGVSKASCCCSLGKAWGTPCELCPSVNTSEYKILC). The short motif at 1543–1545 (RGD) is the Cell attachment site element. The N-linked (GlcNAc...) asparagine glycan is linked to Asn-1583. In terms of domain architecture, EGF-like 27; calcium-binding spans 1608–1649 (DIDECQELPGLCQGGKCINTFGSFQCRCPTGYYLNEDTRVCD). O-linked (Glc) serine glycosylation occurs at Ser-1630. Residues 1650 to 1690 (DVNECETPGICGPGTCYNTVGNYTCICPPDYMQVNGGNNCM) enclose the EGF-like 28; calcium-binding domain. An N-linked (GlcNAc...) asparagine glycan is attached at Asn-1671. Positions 1695 to 1750 (SLCYRNYYADNQTCDGELLFNMTKKMCCCSYNIGRAWNKPCEQCPIPSTDEFATLC) constitute a TB 7 domain. Residues Asn-1705 and Asn-1715 are each glycosylated (N-linked (GlcNAc...) asparagine). The region spanning 1768–1809 (DIDECREIPGVCENGVCINMVGSFRCECPVGFFYNDKLLVCE) is the EGF-like 29; calcium-binding domain. Cystine bridges form between Cys-1772/Cys-1784, Cys-1779/Cys-1793, Cys-1795/Cys-1808, Cys-1814/Cys-1826, Cys-1820/Cys-1835, Cys-1837/Cys-1849, Cys-1855/Cys-1867, Cys-1862/Cys-1876, Cys-1878/Cys-1891, Cys-1897/Cys-1907, Cys-1902/Cys-1916, Cys-1918/Cys-1930, Cys-1936/Cys-1949, Cys-1944/Cys-1958, Cys-1960/Cys-1973, Cys-1979/Cys-1991, Cys-1986/Cys-2000, Cys-2002/Cys-2013, Cys-2019/Cys-2031, Cys-2026/Cys-2040, Cys-2042/Cys-2055, Cys-2063/Cys-2085, Cys-2072/Cys-2098, Cys-2086/Cys-2101, Cys-2087/Cys-2113, Cys-2133/Cys-2144, Cys-2139/Cys-2153, Cys-2155/Cys-2166, Cys-2172/Cys-2183, Cys-2178/Cys-2192, Cys-2194/Cys-2206, Cys-2212/Cys-2223, Cys-2219/Cys-2232, Cys-2234/Cys-2247, Cys-2253/Cys-2267, Cys-2260/Cys-2276, Cys-2278/Cys-2291, Cys-2297/Cys-2309, Cys-2304/Cys-2318, and Cys-2320/Cys-2333. Positions 1810 to 1850 (DIDECQNGPVCQRNAECINTAGSYRCDCKPGYRLTSTGQCN) constitute an EGF-like 30; calcium-binding domain. O-linked (Glc) serine glycosylation occurs at Ser-1832. Residues 1851 to 1892 (DRNECQEIPNICSHGQCIDTVGSFYCLCHTGFKTNVDQTMCL) enclose the EGF-like 31; calcium-binding domain. Ser-1873 carries an O-linked (Glc) serine glycan. The EGF-like 32; calcium-binding domain occupies 1893 to 1931 (DINECERDACGNGTCRNTIGSFNCRCNHGFILSHNNDCI). Asn-1904 is a glycosylation site (N-linked (GlcNAc...) asparagine). A glycan (O-linked (Glc) serine) is linked at Ser-1913. An EGF-like 33; calcium-binding domain is found at 1932–1974 (DVDECATGNGNLCRNGQCVNTVGSFQCRCNEGYEVAPDGRTCV). Ser-1955 carries O-linked (Glc) serine glycosylation. Positions 1975-2014 (DINECVLDPGKCAPGTCQNLDGSYRCICPPGYSLQNDKCE) constitute an EGF-like 34; calcium-binding domain. The 42-residue stretch at 2015–2056 (DIDECVEEPEICALGTCSNTEGSFKCLCPEGFSLSSTGRRCQ) folds into the EGF-like 35; calcium-binding domain. Ser-2037 carries O-linked (Glc) serine glycosylation. A TB 8 domain is found at 2061-2113 (SYCYAKFEGGKCSSPKSRNHSKQECCCALKGEGWGDPCELCPTEPDEAFRQIC). A glycan (N-linked (GlcNAc...) asparagine) is linked at Asn-2079. Positions 2129–2167 (DMDECKEPDVCRHGQCINTDGSYRCECPFGYILEGNECV) constitute an EGF-like 36; calcium-binding domain. Residue Ser-2150 is glycosylated (O-linked (Glc) serine). In terms of domain architecture, EGF-like 37; calcium-binding spans 2168–2207 (DTDECSVGNPCGNGTCKNVIGGFECTCEEGFEPGPMMTCE). The N-linked (GlcNAc...) asparagine glycan is linked to Asn-2180. Residues 2208-2248 (DINECAQNPLLCAFRCVNTYGSYECKCPVGYVLREDRRMCK) form the EGF-like 38; calcium-binding domain. The O-linked (Glc) serine glycan is linked to Ser-2229. The EGF-like 39; calcium-binding domain maps to 2249-2292 (DEDECAEGKHDCTEKQMECKNLIGTYMCICGPGYQRRPDGEGCI). Residues 2293–2334 (DENECQTKPGICENGRCLNTLGSYTCECNDGFTASPTQDECL) form the EGF-like 40; calcium-binding domain. O-linked (Glc) serine glycosylation is present at Ser-2315. Residues 2339 to 2392 (GYCFSEVLQNMCQIGSSNRNPVTKSECCCDGGRGWGPHCEICPFEGTVAYKKLC) form the TB 9 domain. Residues 2404 to 2445 (DIDECKVIHDVCRNGECVNDRGSYHCICKTGYTPDITGTACV) enclose the EGF-like 41; calcium-binding domain. Intrachain disulfides connect Cys-2408–Cys-2420, Cys-2415–Cys-2429, Cys-2431–Cys-2444, Cys-2450–Cys-2461, Cys-2457–Cys-2470, Cys-2472–Cys-2485, Cys-2491–Cys-2502, Cys-2498–Cys-2511, Cys-2513–Cys-2524, Cys-2530–Cys-2543, Cys-2537–Cys-2552, Cys-2554–Cys-2567, Cys-2573–Cys-2583, Cys-2579–Cys-2592, Cys-2594–Cys-2607, Cys-2613–Cys-2624, Cys-2619–Cys-2633, Cys-2635–Cys-2648, Cys-2654–Cys-2665, Cys-2661–Cys-2674, and Cys-2676–Cys-2688. The EGF-like 42; calcium-binding domain occupies 2446–2486 (DLNECNQAPKPCNFICKNTEGSYQCSCPKGYILQEDGRSCK). Ser-2467 carries an O-linked (Glc) serine glycan. The region spanning 2487–2525 (DLDECATKQHNCQFLCVNTIGGFTCKCPPGFTQHHTACI) is the EGF-like 43; calcium-binding domain. In terms of domain architecture, EGF-like 44; calcium-binding spans 2526-2568 (DNNECTSDINLCGSKGVCQNTPGSFTCECQRGFSLDQSGASCE). Ser-2549 carries an O-linked (Glc) serine glycan. Residues 2569-2608 (DVDECEGNHRCQHGCQNIIGGYRCSCPQGYLQHYQWNQCV) form the EGF-like 45; calcium-binding domain. The region spanning 2609 to 2649 (DENECLSAHVCGGASCHNTLGSYKCMCPTGFQYEQFSGGCQ) is the EGF-like 46; calcium-binding domain. An O-linked (Glc) serine glycan is attached at Ser-2630. Positions 2650 to 2689 (DINECGSSQAPCSYGCSNTEGGYLCGCPPGYFRIGQGHCV) constitute an EGF-like 47; calcium-binding domain. A phosphoserine mark is found at Ser-2704, Ser-2705, and Ser-2711. Residues 2728-2747 (RGRKRRSTNETDASDIQDGS) form a disordered region. 3 N-linked (GlcNAc...) asparagine glycosylation sites follow: Asn-2736, Asn-2752, and Asn-2769.

The protein belongs to the fibrillin family. In terms of assembly, interacts with COL16A1. Interacts with integrin alpha-V/beta-3. Interacts with ADAMTS10; this interaction promotes microfibril assembly. Interacts with THSD4; this interaction promotes fibril formation. Interacts (via N-terminal domain) with FBLN2 and FBLN5. Interacts with ELN. Forms a ternary complex with ELN and FBLN2 or FBLN5 and a significant interaction with ELN seen only in the presence of FBLN2 or FBLN5. Interacts (via N-terminal domain) with LTBP2 (via C-terminal domain) in a Ca(+2)-dependent manner. Interacts (via N-terminal domain) with LTBP1 (via C-terminal domain). Interacts with integrins ITGA5:ITGB1, ITGAV:ITGB3 and ITGAV:ITGB6. Interacts (via N-terminal domain) with BMP2, BMP4, BMP7, BMP10 and GDF5. Interacts (via N-terminal domain) with MFAP2 and MFAP5. Interacts with ADAMTSL5. Interacts with MFAP4. Interacts (via N-terminal domain) with TNFSF11 in a Ca(+2)-dependent manner. Interacts (via N-terminal domain) with EFEMP2; this interaction inhibits EFEMP2 binding to LOX and ELN. In terms of processing, cleavage of N- and C-terminus by furin is required for incorporation into the extracellular matrix and assembly into microfibrils. The C-terminus, which corresponds to the Asprosin chain, was initially thought to constitute a propeptide. Fibrillin-1 and Asprosin chains are still linked together during the secretion from cells, but are subsequently separated by furin, an essential step for incorporation of Fibrillin-1 into the nascent microfibrils. Post-translationally, forms intermolecular disulfide bonds either with other fibrillin-1 molecules or with other components of the microfibrils. O-glycosylated on serine residues by POGLUT2 and POGLUT3 which is necessary for efficient protein secretion. As to expression, strongly expressed during the first week of osteoblast differentiation. In terms of tissue distribution, secreted by white adipose tissue (at protein level).

It localises to the secreted. The protein localises to the extracellular space. It is found in the extracellular matrix. Functionally, structural component of the 10-12 nm diameter microfibrils of the extracellular matrix, which conveys both structural and regulatory properties to load-bearing connective tissues. Fibrillin-1-containing microfibrils provide long-term force bearing structural support. In tissues such as the lung, blood vessels and skin, microfibrils form the periphery of the elastic fiber, acting as a scaffold for the deposition of elastin. In addition, microfibrils can occur as elastin-independent networks in tissues such as the ciliary zonule, tendon, cornea and glomerulus where they provide tensile strength and have anchoring roles. Fibrillin-1 also plays a key role in tissue homeostasis through specific interactions with growth factors, such as the bone morphogenetic proteins (BMPs), growth and differentiation factors (GDFs) and latent transforming growth factor-beta-binding proteins (LTBPs), cell-surface integrins and other extracellular matrix protein and proteoglycan components. Regulates osteoblast maturation by controlling TGF-beta bioavailability and calibrating TGF-beta and BMP levels, respectively. Negatively regulates osteoclastogenesis by binding and sequestering an osteoclast differentiation and activation factor TNFSF11. This leads to disruption of TNFSF11-induced Ca(2+) signaling and impairment of TNFSF11-mediated nuclear translocation and activation of transcription factor NFATC1 which regulates genes important for osteoclast differentiation and function. Mediates cell adhesion via its binding to cell surface receptors integrins ITGAV:ITGB3 and ITGA5:ITGB1. Binds heparin and this interaction plays an important role in the assembly of microfibrils. Adipokine secreted by white adipose tissue that plays an important regulatory role in the glucose metabolism of liver, muscle and pancreas. Hormone that targets the liver in response to fasting to increase plasma glucose levels. Binds the olfactory receptor Olfr734 at the surface of hepatocytes and promotes hepatocyte glucose release by activating the protein kinase A activity in the liver, resulting in rapid glucose release into the circulation. May act as a regulator of adaptive thermogenesis by inhibiting browning and energy consumption, while increasing lipid deposition in white adipose tissue. Also acts as an orexigenic hormone that increases appetite: crosses the blood brain barrier and exerts effects on the hypothalamus. In the arcuate nucleus of the hypothalamus, asprosin directly activates orexigenic AgRP neurons and indirectly inhibits anorexigenic POMC neurons, resulting in appetite stimulation. Activates orexigenic AgRP neurons via binding to the olfactory receptor Olfr734. May also play a role in sperm motility in testis via interaction with Olfr734 receptor. The chain is Fibrillin-1 from Mus musculus (Mouse).